Here is a 602-residue protein sequence, read N- to C-terminus: Threonine--tRNA ligase (602 aa).

A catalytic region spans residues Asp-208–Pro-499. 3 residues coordinate Zn(2+): Cys-300, His-351, and His-476.

This sequence belongs to the class-II aminoacyl-tRNA synthetase family. In terms of assembly, homodimer. Requires Zn(2+) as cofactor.

It is found in the cytoplasm. It carries out the reaction tRNA(Thr) + L-threonine + ATP = L-threonyl-tRNA(Thr) + AMP + diphosphate + H(+). Catalyzes the attachment of threonine to tRNA(Thr) in a two-step reaction: L-threonine is first activated by ATP to form Thr-AMP and then transferred to the acceptor end of tRNA(Thr). Also edits incorrectly charged L-seryl-tRNA(Thr). This Campylobacter jejuni subsp. doylei (strain ATCC BAA-1458 / RM4099 / 269.97) protein is Threonine--tRNA ligase.